The primary structure comprises 462 residues: FAD-dependent monooxygenase opaC (462 aa).

N-linked (GlcNAc...) asparagine glycosylation is present at Asn10. The helical transmembrane segment at 14 to 34 (ITVIIIGLGIGGLTAAISCHL) threads the bilayer. Asp43 serves as a coordination point for FAD. Asn60 carries an N-linked (GlcNAc...) asparagine glycan. Arg115 contributes to the FAD binding site. Arg193 is an active-site residue. Positions 322 and 335 each coordinate FAD.

It belongs to the paxM FAD-dependent monooxygenase family. Requires FAD as cofactor.

It localises to the membrane. Its pathway is secondary metabolite biosynthesis. Its function is as follows. FAD-dependent monooxygenase; part of the gene cluster that mediates the biosynthesis of oxepinamides, derivatives of anthranilyl-containing tripeptides that share an oxepin ring and a fused pyrimidinone moiety. The nonribosomal peptide synthetase (NRPS) opaA assembles the quinazolinone core with D-Phe incorporation. The first adenylation domain (A1) of opaA loads and activates anthranilic acid whereas the second A domain (A2) is for activating of L-Phe, which is then converted to D-form by the E domain. The third A domain (A3) is responsible for L-Ile activation and the terminal condensation domain C3 for cyclization and releasing the NRPS product protuboxepin K. The cytochrome P450 monooxygenase opaB then catalyzes alone the oxepin ring formation to convert protuboxepin K into protuboxepin A. The flavoenzyme opaC installs subsequently one hydroxyl group at the oxepin ring, accompanied by double bond migration, to form 15-epi-oxepinamide E. The epimerase opaE changes the D-Phe residue back to L-form, leading to oxepinamide E, which is further methylated at the hydroxyl group at C-12 by the O-methyltransferase OpaF to yield oxepinamide F. The polypeptide is FAD-dependent monooxygenase opaC (Aspergillus ustus).